The sequence spans 200 residues: uncharacterized protein (200 aa).

This is an uncharacterized protein from Commelina yellow mottle virus (CoYMV).